A 145-amino-acid chain; its full sequence is Histone H2B.7 (145 aa).

The segment covering 1–30 has biased composition (basic and acidic residues); sequence MAPKAEKKPAEKKPVEEKSKAEKAPAEKKP. The disordered stretch occupies residues 1 to 53; it reads MAPKAEKKPAEKKPVEEKSKAEKAPAEKKPKAGKKLPKEAGAGGDKKKKMKKK. A2 carries the post-translational modification N,N,N-trimethylalanine; alternate. A2 bears the N,N-dimethylalanine; alternate mark. Position 2 is an N-methylalanine; alternate (A2). Residue K4 is modified to N6-methyllysine; partial. 2 positions are modified to N6-acetyllysine: K7 and K12. Residue K13 is modified to N6,N6-dimethyllysine. N6-acetyllysine is present on residues K23, K28, and K34. K35 is modified (N6-acetyllysine; partial). A Glycyl lysine isopeptide (Lys-Gly) (interchain with G-Cter in ubiquitin) cross-link involves residue K141.

It belongs to the histone H2B family. As to quaternary structure, the nucleosome is a histone octamer containing two molecules each of H2A, H2B, H3 and H4 assembled in one H3-H4 heterotetramer and two H2A-H2B heterodimers. The octamer wraps approximately 147 bp of DNA. In terms of processing, can be acetylated to form H2BK6ac, H2BK11ac, H2BK22ac, H2BK27ac H2BK33ac and H2BK34ac. Mono-, di- or trimethylated at the N-terminus to form H2BA1me1/2/3. H2BA1me2 and H2BA1me3 may be methylated and/or acetylated to form H2BA1me2K3me1, H2BA1me2K3me1K6ac, H2BA1me2K6ac H2BA1me3K6ac, H2BA1me3K6acK11ac and H2BA1me2K3me1K6acK11ac. Post-translationally, monoubiquitinated by BRE1 to form H2BK143ub1 and deubiquitinated by UBP26. Required for heterochromatic histone H3 di- and trimethylation at H3K4me. May give a specific tag for epigenetic transcriptional activation.

The protein resides in the nucleus. It is found in the chromosome. Core component of nucleosome. Nucleosomes wrap and compact DNA into chromatin, limiting DNA accessibility to the cellular machineries which require DNA as a template. Histones thereby play a central role in transcription regulation, DNA repair, DNA replication and chromosomal stability. DNA accessibility is regulated via a complex set of post-translational modifications of histones, also called histone code, and nucleosome remodeling. This chain is Histone H2B.7, found in Arabidopsis thaliana (Mouse-ear cress).